The sequence spans 544 residues: CTP synthase (544 aa).

Residues 1 to 265 form an amidoligase domain region; it reads MTKFIFVTGG…DNIITEQLQL (265 aa). Serine 13 contributes to the CTP binding site. UTP is bound at residue serine 13. Residues 14–19 and aspartate 71 each bind ATP; that span reads SLGKGI. Positions 71 and 139 each coordinate Mg(2+). CTP-binding positions include 146–148, 186–191, and lysine 222; these read DIE and KTKPTQ. UTP is bound by residues 186–191 and lysine 222; that span reads KTKPTQ. Residues 290-544 enclose the Glutamine amidotransferase type-1 domain; the sequence is KIAMVGKYVD…VKAALNNKKA (255 aa). Glycine 353 is an L-glutamine binding site. Cysteine 380 acts as the Nucleophile; for glutamine hydrolysis in catalysis. L-glutamine-binding positions include 381-384, glutamate 404, and arginine 471; that span reads LGMQ. Residues histidine 517 and glutamate 519 contribute to the active site.

This sequence belongs to the CTP synthase family. Homotetramer.

The enzyme catalyses UTP + L-glutamine + ATP + H2O = CTP + L-glutamate + ADP + phosphate + 2 H(+). The catalysed reaction is L-glutamine + H2O = L-glutamate + NH4(+). It catalyses the reaction UTP + NH4(+) + ATP = CTP + ADP + phosphate + 2 H(+). The protein operates within pyrimidine metabolism; CTP biosynthesis via de novo pathway; CTP from UDP: step 2/2. Allosterically activated by GTP, when glutamine is the substrate; GTP has no effect on the reaction when ammonia is the substrate. The allosteric effector GTP functions by stabilizing the protein conformation that binds the tetrahedral intermediate(s) formed during glutamine hydrolysis. Inhibited by the product CTP, via allosteric rather than competitive inhibition. In terms of biological role, catalyzes the ATP-dependent amination of UTP to CTP with either L-glutamine or ammonia as the source of nitrogen. Regulates intracellular CTP levels through interactions with the four ribonucleotide triphosphates. In Neisseria gonorrhoeae (strain ATCC 700825 / FA 1090), this protein is CTP synthase.